We begin with the raw amino-acid sequence, 253 residues long: L-cysteine S-thiosulfotransferase subunit SoxA (253 aa).

The first 17 residues, 1 to 17, serve as a signal peptide directing secretion; sequence MGKWVTIIFVLFLYAIA. The region spanning 44-129 is the Cytochrome c domain; that stretch reads VYAEQGRDMF…SIATYVATLS (86 aa). Residues Cys64, Cys67, His68, Cys102, Cys165, Cys168, and His169 each contribute to the heme c site. Residue Arg210 participates in substrate binding. Cys214 provides a ligand contact to heme c. The active-site Cysteine persulfide intermediate is the Cys214.

Belongs to the SoxA family. In terms of assembly, heterodimer of SoxA and SoxX. It depends on heme c as a cofactor. Cysteine persulfide at Cys-214.

It localises to the periplasm. The catalysed reaction is L-cysteinyl-[SoxY protein] + thiosulfate + 2 Fe(III)-[cytochrome c] = S-sulfosulfanyl-L-cysteinyl-[SoxY protein] + 2 Fe(II)-[cytochrome c] + 2 H(+). It catalyses the reaction S-sulfanyl-L-cysteinyl-[SoxY protein] + thiosulfate + 2 Fe(III)-[cytochrome c] = S-(2-sulfodisulfanyl)-L-cysteinyl-[SoxY protein] + 2 Fe(II)-[cytochrome c] + 2 H(+). C-type diheme cytochrome, which is part of the SoxAX cytochrome complex involved in sulfur oxidation. The SoxAX complex catalyzes the formation of a heterodisulfide bond between the conserved cysteine residue on a sulfur carrier SoxYZ complex subunit SoxY and thiosulfate or other inorganic sulfur substrates. This leads to the liberation of two electrons, which may be transferred from the SoxAX complex to another cytochrome c that then channels them into the respiratory electron transport chain. Some electrons may be used for reductive CO(2) fixation. This is L-cysteine S-thiosulfotransferase subunit SoxA from Hydrogenobacter thermophilus (strain DSM 6534 / IAM 12695 / TK-6).